The sequence spans 1104 residues: Transient receptor potential cation channel subfamily M member 8 (1104 aa).

Residues 1–22 (MSFEGARLSMRSRRNGTMGSTR) are disordered. Over 1 to 733 (MSFEGARLSM…LWYYVAFFTS (733 aa)) the chain is Cytoplasmic. The helical transmembrane segment at 734 to 758 (PFVVFSWNVVFYIAFLLLFAYVLLM) threads the bilayer. The Extracellular segment spans residues 759-765 (DFHSVPH). Residues 766-789 (TPELILYALVFVLFCDEVRQWYMN) traverse the membrane as a helical segment. Positions 782 and 785 each coordinate Ca(2+). Residues 790 to 796 (GVNYFTD) lie on the Cytoplasmic side of the membrane. Residues 797–817 (LWNVMDTLGLFYFIAGIVFRL) traverse the membrane as a helical segment. Ca(2+) is bound by residues N799 and D802. Residues 818–822 (HSSNK) are Extracellular-facing. A helical membrane pass occupies residues 823–848 (SSLYSGRVIFCLDYIIFTLRLIHIFT). Over 849–853 (VSRNL) the chain is Cytoplasmic. The helical transmembrane segment at 854 to 890 (GPKIIMLQRMLIDVFFFLFLFAVWMVAFGVARQGILR) threads the bilayer. Over 891–895 (QNEQR) the chain is Extracellular. The segment at residues 896–912 (WRWIFRSVIYEPYLAMF) is an intramembrane region (pore-forming). At 913-953 (GQVPSDVDSTTYDFSHCTFSGNESKPLCVELDEHNLPRFPE) the chain is on the extracellular side. Residue N934 is glycosylated (N-linked (GlcNAc...) (complex) asparagine). The chain crosses the membrane as a helical span at residues 954 to 984 (WITIPLVCIYMLSTNILLVNLLVAMFGYTVG). Residues 985 to 1104 (IVQENNDQVW…LLKEIANNIK (120 aa)) are Cytoplasmic-facing. Positions 1069-1104 (TKANDNSEEMRHRFRQLDSKLNDLKSLLKEIANNIK) form a coiled coil.

The protein belongs to the transient receptor (TC 1.A.4) family. LTrpC subfamily. TRPM8 sub-subfamily. Homotetramer. Interacts (via N-terminus and C-terminus domains) with TCAF1; the interaction stimulates TRPM8 channel activity. Interacts (via N-terminus and C-terminus domains) with TCAF2; the interaction inhibits TRPM8 channel activity. Post-translationally, N-glycosylation is not essential for but facilitates cell surface expression, multimerization, association with lipid rafts and ion channel activity. Expressed in dorsal root and trigeminal ganglia. Specifically expressed in a subset of pain- and temperature-sensing neurons. Not expressed in heavily myelinated neurons. Not expressed in neurons expressing TRPA1 or TRPV1.

Its subcellular location is the cell membrane. It localises to the membrane raft. The catalysed reaction is Ca(2+)(in) = Ca(2+)(out). It catalyses the reaction Na(+)(in) = Na(+)(out). The enzyme catalyses K(+)(in) = K(+)(out). Activated by cold temperatures and by both natural and synthetic cooling compounds such as menthol and icilin. Activation of the channel requires the presence of PI(4,5)P2; PI(4,5)P2 is necessary to gate the channel. Activated by intracellular Ca(2+). Functionally, non-selective ion channel permeable to monovalent and divalent cations, including Na(+), K(+), and Ca(2+), with higher permeability for Ca(2+). Activated by multiple factors, such as temperature, voltage, pressure, and changes in osmolality. Activated by cool temperatures (&lt;23-28 degrees Celsius) and by chemical ligands evoking a sensation of coolness, such as menthol and icilin, therefore plays a central role in the detection of environmental cold temperatures. TRPM8 is a voltage-dependent channel; its activation by cold or chemical ligands shifts its voltage thresholds towards physiological membrane potentials, leading to the opening of the channel. In addition to its critical role in temperature sensing, regulates basal tear secretion by sensing evaporation-induced cooling and changes in osmolality. The chain is Transient receptor potential cation channel subfamily M member 8 (Trpm8) from Mus musculus (Mouse).